Consider the following 357-residue polypeptide: Peptide chain release factor 1 (357 aa).

Gln-233 bears the N5-methylglutamine mark.

It belongs to the prokaryotic/mitochondrial release factor family. Post-translationally, methylated by PrmC. Methylation increases the termination efficiency of RF1.

It is found in the cytoplasm. Peptide chain release factor 1 directs the termination of translation in response to the peptide chain termination codons UAG and UAA. The chain is Peptide chain release factor 1 from Syntrophus aciditrophicus (strain SB).